Here is a 147-residue protein sequence, read N- to C-terminus: Hemoglobin subunit beta (147 aa).

Residue Val2 is modified to N-acetylvaline. The 145-residue stretch at 3–147 (HLSAEEKGHI…VATALAHKYH (145 aa)) folds into the Globin domain. Lys60 carries the post-translational modification N6-acetyllysine. His64 provides a ligand contact to heme b. The residue at position 83 (Lys83) is an N6-acetyllysine. Heme b is bound at residue His93. Cys94 bears the S-nitrosocysteine mark. The residue at position 145 (Lys145) is an N6-acetyllysine.

It belongs to the globin family. In terms of assembly, heterotetramer of two alpha chains and two beta chains. In terms of tissue distribution, red blood cells.

Its function is as follows. Involved in oxygen transport from the lung to the various peripheral tissues. The polypeptide is Hemoglobin subunit beta (HBB) (Sminthopsis crassicaudata (Fat-tailed dunnart)).